The following is a 318-amino-acid chain: 2,4-dinitroanisole O-demethylase subunit beta (318 aa).

It belongs to the metallo-beta-lactamase superfamily. As to quaternary structure, part of the complex DnhAB composed of the 2,4-dinitroanisole O-demethylase alpha (DnhA) and beta (DnhB) subunits.

It carries out the reaction 2,4-dinitroanisole + H2O = 2,4-dinitrophenol + methanol + H(+). Its function is as follows. Involved in the degradation of 2,4-dinitroanisole (DNAN), an insensitive munition ingredient used in explosive formulations as a replacement for 2,4,6-trinitrotoluene (TNT). Catalyzes the removal of the methyl group from 2,4-dinitroanisole (DNAN) to yield 2,4-dinitrophenol (2,4-DNP) and methanol. The protein is 2,4-dinitroanisole O-demethylase subunit beta of Nocardioides sp. (strain JS1661).